The sequence spans 511 residues: ATP synthase subunit alpha (511 aa).

Residue 169–176 (GDRQTGKT) coordinates ATP.

Belongs to the ATPase alpha/beta chains family. In terms of assembly, F-type ATPases have 2 components, CF(1) - the catalytic core - and CF(0) - the membrane proton channel. CF(1) has five subunits: alpha(3), beta(3), gamma(1), delta(1), epsilon(1). CF(0) has three main subunits: a(1), b(2) and c(9-12). The alpha and beta chains form an alternating ring which encloses part of the gamma chain. CF(1) is attached to CF(0) by a central stalk formed by the gamma and epsilon chains, while a peripheral stalk is formed by the delta and b chains.

It is found in the cell inner membrane. The enzyme catalyses ATP + H2O + 4 H(+)(in) = ADP + phosphate + 5 H(+)(out). Its function is as follows. Produces ATP from ADP in the presence of a proton gradient across the membrane. The alpha chain is a regulatory subunit. This Bartonella tribocorum (strain CIP 105476 / IBS 506) protein is ATP synthase subunit alpha.